The primary structure comprises 218 residues: Octanoyltransferase (218 aa).

The 183-residue stretch at 30-212 (ENTADEIWLV…HFYNILGYNA (183 aa)) folds into the BPL/LPL catalytic domain. Residues 69–76 (RGGQITYH), 141–143 (SLG), and 154–156 (GLA) each bind substrate. Residue Cys-172 is the Acyl-thioester intermediate of the active site.

This sequence belongs to the LipB family.

The protein resides in the cytoplasm. It catalyses the reaction octanoyl-[ACP] + L-lysyl-[protein] = N(6)-octanoyl-L-lysyl-[protein] + holo-[ACP] + H(+). Its pathway is protein modification; protein lipoylation via endogenous pathway; protein N(6)-(lipoyl)lysine from octanoyl-[acyl-carrier-protein]: step 1/2. In terms of biological role, catalyzes the transfer of endogenously produced octanoic acid from octanoyl-acyl-carrier-protein onto the lipoyl domains of lipoate-dependent enzymes. Lipoyl-ACP can also act as a substrate although octanoyl-ACP is likely to be the physiological substrate. The chain is Octanoyltransferase from Actinobacillus pleuropneumoniae serotype 5b (strain L20).